We begin with the raw amino-acid sequence, 146 residues long: Leghemoglobin Lb120-34 (146 aa).

One can recognise a Globin domain in the interval 2 to 146 (GFTEKQEALV…LASAIKKAMN (145 aa)). 2 positions are modified to nitrated tyrosine: Y24 and Y29. S44 contributes to the heme b binding site. S44 carries the post-translational modification Phosphoserine. H61 contacts O2. The heme b site is built by K64, H93, and K96. At Y134 the chain carries Nitrated tyrosine.

It belongs to the plant globin family. In terms of assembly, monomer. Post-translationally, nitrated in effective nodules and particularly in hypoxic conditions; this mechanism may play a protective role in the symbiosis by buffering toxic peroxynitrite NO(2)(-). Nitration level decrease during nodule senescence. Phosphorylation at Ser-44 disrupts the molecular environment of its porphyrin ring oxygen binding pocket, thus leading to a reduced oxygen consumption and to the delivery of oxygen O(2) to symbiosomes. In terms of tissue distribution, root nodules.

The protein localises to the cytoplasm. The protein resides in the cytosol. Its subcellular location is the nucleus. In terms of biological role, leghemoglobin that reversibly binds oxygen O(2) through a pentacoordinated heme iron. In root nodules, facilitates the diffusion of oxygen to the bacteroids while preventing the bacterial nitrogenase from being inactivated by buffering dioxygen, nitric oxide and carbon monoxide, and promoting the formation of reactive oxygen species (ROS, e.g. H(2)O(2)). This role is essential for symbiotic nitrogen fixation (SNF). In Pisum sativum (Garden pea), this protein is Leghemoglobin Lb120-34.